Consider the following 391-residue polypeptide: Pyruvate dehydrogenase E1 component subunit alpha, mitochondrial (391 aa).

The N-terminal 26 residues, 1-26, are a transit peptide targeting the mitochondrion; sequence MALSTSRAINHIMKPLSAAVCATRRL. Residues His-92, Tyr-118, Arg-119, Gly-167, Val-169, Asp-198, Gly-199, Ala-200, Asn-227, and Tyr-229 each coordinate pyruvate. 8 residues coordinate thiamine diphosphate: Tyr-118, Arg-119, Gly-167, Val-169, Asp-198, Gly-199, Ala-200, and Asn-227. Asp-198 contributes to the Mg(2+) binding site. Mg(2+) is bound by residues Asn-227 and Tyr-229. Thiamine diphosphate is bound at residue His-293. Residues 294 to 313 form a disordered region; it reads SMSDPGSTYRTRDEISGVRQ. Over residues 303–313 the composition is skewed to basic and acidic residues; the sequence is RTRDEISGVRQ.

In terms of assembly, tetramer of 2 alpha and 2 beta subunits. The cofactor is thiamine diphosphate. Requires Mg(2+) as cofactor.

The protein localises to the mitochondrion matrix. It catalyses the reaction N(6)-[(R)-lipoyl]-L-lysyl-[protein] + pyruvate + H(+) = N(6)-[(R)-S(8)-acetyldihydrolipoyl]-L-lysyl-[protein] + CO2. E1 activity is regulated by phosphorylation (inactivation) and dephosphorylation (activation) of the alpha subunit. In terms of biological role, the pyruvate dehydrogenase complex catalyzes the overall conversion of pyruvate to acetyl-CoA and CO(2). It contains multiple copies of three enzymatic components: pyruvate dehydrogenase (E1), dihydrolipoamide acetyltransferase (E2) and lipoamide dehydrogenase (E3). This is Pyruvate dehydrogenase E1 component subunit alpha, mitochondrial from Solanum tuberosum (Potato).